The following is a 1839-amino-acid chain: Mannuronan C5-epimerase AlgE3 (1839 aa).

PbH1 repeat units follow at residues 133 to 155 (DRDV…DPHE), 157 to 179 (TINL…VADY), 180 to 202 (QVGG…NIVT), 204 to 226 (TNDF…VVQR), 257 to 279 (THDV…RVYG), 280 to 302 (AQDV…YAEV), 320 to 342 (TTGT…GIQE), and 347 to 369 (TDYS…RLYG). Residues 372–386 (STVSEQPSSGQQATL) show a composition bias toward polar residues. The tract at residues 372 to 392 (STVSEQPSSGQQATLEGTAGN) is disordered. 9 Hemolysin-type calcium-binding repeats span residues 387–399 (EGTA…SGTG), 406–422 (GLAG…DDTL), 424–440 (GGAG…ADTF), 538–550 (TGTE…SGTD), 557–573 (GYGG…NDIL), 574–591 (VGGA…ADVF), 695–709 (EGTD…TGAD), 714–730 (GLGG…DDVL), and 732–748 (GGAE…ADTF). PbH1 repeat units follow at residues 975-997 (DRNV…DPHE), 999-1021 (TINL…VADY), 1022-1044 (LVDS…NVVT), 1046-1068 (TYDF…VIQR), 1099-1121 (TNNI…RLYG), 1122-1143 (TEDV…AYAE), 1161-1183 (TTGT…GIEE), and 1188-1210 (TDYS…RLNG). Over residues 1215 to 1236 (VSDQPGTGQQATLEGTTGNDTL) the composition is skewed to polar residues. The disordered stretch occupies residues 1215 to 1238 (VSDQPGTGQQATLEGTTGNDTLGG). 10 Hemolysin-type calcium-binding repeats span residues 1229–1243 (GTTG…DAHE), 1247–1263 (GLDG…NDIL), 1265–1281 (GGVG…ADTF), 1398–1414 (GHAG…DDIL), 1415–1432 (VGGA…ADVF), 1536–1552 (EGTA…ADEV), 1554–1571 (HGGS…ADVF), 1670–1681 (GGDGNDTLSGGS), 1688–1704 (GGAG…NDIL), and 1706–1722 (GGAG…SDIF).

It belongs to the D-mannuronate C5-epimerase family. Ca(2+) serves as cofactor.

Its subcellular location is the secreted. The enzyme catalyses [(1-&gt;4)-beta-D-mannuronosyl](n) = [alginate](n). Its pathway is glycan biosynthesis; alginate biosynthesis. With respect to regulation, inhibited by zinc. Converts beta-D-mannuronic acid (M) to alpha-L-guluronic acid (G), producing a polymer with gel-forming capacity, required for the formation of the cyst coat. The sequence is that of Mannuronan C5-epimerase AlgE3 from Azotobacter vinelandii.